The primary structure comprises 217 residues: Nucleoside diphosphate-linked moiety X motif 6 (217 aa).

Residues 42 to 177 (THQVGVAGAV…VAKLLLYGYN (136 aa)) enclose the Nudix hydrolase domain. The Nudix box motif lies at 77-98 (GLSDQGEDIGATAVREVLEETG).

Belongs to the Nudix hydrolase family. In terms of tissue distribution, detected in liver (at protein level).

It is found in the cytoplasm. Its subcellular location is the nucleus. The protein localises to the mitochondrion. May contribute to the regulation of cell proliferation. The chain is Nucleoside diphosphate-linked moiety X motif 6 (nudt6) from Xenopus laevis (African clawed frog).